Consider the following 527-residue polypeptide: Protein TIC 56, chloroplastic (527 aa).

The N-terminal 48 residues, 1–48 (MSSMNFNPFQNWFEKPPNPVPSINFVSLADSFFPKSQSPNFASIGLPK), are a transit peptide targeting the chloroplast. Positions 43-67 (SIGLPKFSKKSPKPETAGTDEPGPY) are disordered. The residue at position 350 (N350) is a Deamidated asparagine. Residues 491–508 (RREEELREEDLKHYSGRT) are compositionally biased toward basic and acidic residues. The segment at 491-527 (RREEELREEDLKHYSGRTDEDEEEEEEEDDDSNSKKD) is disordered. Acidic residues predominate over residues 509 to 521 (DEDEEEEEEEDDD).

As to quaternary structure, part of the Tic complex. Component of the 1-MD complex, composed of TIC20-I, TIC214, TIC100 and TIC56. Interacts with the translocating preproteins. Hydrolysis of ATP is essential for the formation of this complex. The 1-MD complex interacts with TIC21.

Its subcellular location is the plastid. It localises to the chloroplast inner membrane. Functionally, involved in protein precursor import into chloroplasts. May be part of an intermediate translocation complex acting as a protein-conducting channel at the inner envelope. The polypeptide is Protein TIC 56, chloroplastic (Arabidopsis thaliana (Mouse-ear cress)).